Here is a 302-residue protein sequence, read N- to C-terminus: DNA-binding transcriptional activator HetR (302 aa).

The active site involves Ser-153.

The protein belongs to the peptidase S48 family. In terms of assembly, homodimer; disulfide-linked.

In terms of biological role, might be involved in temporal and/or spatial regulation of nitrogen fixation. Dimerization is required for DNA-binding. Has both a protease and a DNA-binding activity. This Trichodesmium erythraeum (strain IMS101) protein is DNA-binding transcriptional activator HetR.